The following is a 600-amino-acid chain: Mitoguardin 1 (600 aa).

Transmembrane regions (helical) follow at residues 15–32 and 38–58; these read TYAV…YSLS and PVAK…IFLA. A phosphoserine mark is found at Ser-257 and Ser-261.

It belongs to the mitoguardin family. Homodimer and heterodimer; forms heterodimers with MIGA2. Interacts with PLD6/MitoPLD.

It is found in the mitochondrion outer membrane. Its function is as follows. Regulator of mitochondrial fusion. Acts by forming homo- and heterodimers at the mitochondrial outer membrane and facilitating the formation of PLD6/MitoPLD dimers. May act by regulating phospholipid metabolism via PLD6/MitoPLD. The sequence is that of Mitoguardin 1 from Mus musculus (Mouse).